Here is a 488-residue protein sequence, read N- to C-terminus: Aerolysin (488 aa).

The N-terminal stretch at 1-24 (MMNRIITANLAFLASSLMLAQVQA) is a signal peptide. 2 disulfide bridges follow: C43–C99 and C183–C188. The interval 69–85 (WQITGLADRWVIMGPGY) is interaction with host N-linked glycan. Residues 256 to 288 (YSLSEKVTTKNKFQWPLVGETELAIEIAASQSW) form a part of the transmembrane beta-barrel after proteolytic activation of the toxin and insertion into the host membrane region. An interaction with glycans from host GPI-anchor region spans residues 346–355 (RWGGNAWYTH). The propeptide occupies 444–488 (TRSAKAAQLRSASAEEVALTSVDLDSEALANEGFGNVSLTIVPVQ).

The protein belongs to the aerolysin family. As to quaternary structure, homodimer in solution; homoheptamer in the host membrane. After binding to GPI-anchored proteins in target membranes and proteolytic removal of the C-terminal propeptide, the protein assembles into a heptameric pre-pore complex. A further conformation change leads to insertion into the host membrane. In terms of processing, proteolytic cleavage and subsequent release of the propeptide trigger a major conformation change, leading to the formation of a heptameric pre-pore that then inserts into the host membrane.

The protein localises to the secreted. It is found in the host cell membrane. Secreted, cytolytic toxin that forms pores in host membranes after proteolytic removal of a C-terminal propeptide, leading to destruction of the membrane permeability barrier and cell death. The pores are formed by transmembrane beta-strands and are approximately 3 nm in diameter. In Aeromonas sobria, this protein is Aerolysin (asa1).